The following is an 874-amino-acid chain: Alanine--tRNA ligase (874 aa).

Zn(2+)-binding residues include histidine 563, histidine 567, cysteine 664, and histidine 668.

It belongs to the class-II aminoacyl-tRNA synthetase family. It depends on Zn(2+) as a cofactor.

It is found in the cytoplasm. It carries out the reaction tRNA(Ala) + L-alanine + ATP = L-alanyl-tRNA(Ala) + AMP + diphosphate. Its function is as follows. Catalyzes the attachment of alanine to tRNA(Ala) in a two-step reaction: alanine is first activated by ATP to form Ala-AMP and then transferred to the acceptor end of tRNA(Ala). Also edits incorrectly charged Ser-tRNA(Ala) and Gly-tRNA(Ala) via its editing domain. The sequence is that of Alanine--tRNA ligase from Methylobacillus flagellatus (strain ATCC 51484 / DSM 6875 / VKM B-1610 / KT).